The primary structure comprises 795 residues: Protein espinas (795 aa).

Positions 30 to 96 are disordered; it reads GTGLTFPPHR…FVSPLQRRHC (67 aa). Residues 52-66 are compositionally biased toward low complexity; the sequence is ASMSSNVASTATSSN. A PET domain is found at 135–243; the sequence is LDFQRNSQSD…AVRLLSDERP (109 aa). LIM zinc-binding domains follow at residues 242–306, 307–367, and 368–430; these read RPCK…ETQK, PRCS…MFAE, and YCDY…GEPP. 2 disordered regions span residues 427–487 and 616–684; these read GEPP…GSAG and NRNT…EMQI. 2 stretches are compositionally biased toward basic and acidic residues: residues 459 to 471 and 637 to 649; these read RSGDRDRERESSR and LDNRPLKEVRFHS. Residues 650-662 show a composition bias toward polar residues; sequence VQDTMSRSKSYTD. Basic residues predominate over residues 666–675; that stretch reads ARRRRRRRNQ.

The protein belongs to the prickle / espinas / testin family.

This chain is Protein espinas, found in Drosophila pseudoobscura pseudoobscura (Fruit fly).